The chain runs to 409 residues: Tyrosine--tRNA ligase (409 aa).

The 'HIGH' region motif lies at 54 to 63 (PTAPDIHLGH). Positions 238–242 (KMSKS) match the 'KMSKS' region motif. Lys241 lines the ATP pocket. An S4 RNA-binding domain is found at 347 to 407 (QGILRILREA…GKRKFARVKL (61 aa)).

It belongs to the class-I aminoacyl-tRNA synthetase family. TyrS type 2 subfamily. In terms of assembly, homodimer.

It localises to the cytoplasm. It catalyses the reaction tRNA(Tyr) + L-tyrosine + ATP = L-tyrosyl-tRNA(Tyr) + AMP + diphosphate + H(+). Functionally, catalyzes the attachment of tyrosine to tRNA(Tyr) in a two-step reaction: tyrosine is first activated by ATP to form Tyr-AMP and then transferred to the acceptor end of tRNA(Tyr). The chain is Tyrosine--tRNA ligase from Bordetella parapertussis (strain 12822 / ATCC BAA-587 / NCTC 13253).